A 370-amino-acid polypeptide reads, in one-letter code: Aminomethyltransferase (370 aa).

Belongs to the GcvT family. As to quaternary structure, the glycine cleavage system is composed of four proteins: P, T, L and H.

The catalysed reaction is N(6)-[(R)-S(8)-aminomethyldihydrolipoyl]-L-lysyl-[protein] + (6S)-5,6,7,8-tetrahydrofolate = N(6)-[(R)-dihydrolipoyl]-L-lysyl-[protein] + (6R)-5,10-methylene-5,6,7,8-tetrahydrofolate + NH4(+). The glycine cleavage system catalyzes the degradation of glycine. The polypeptide is Aminomethyltransferase (Leptospira biflexa serovar Patoc (strain Patoc 1 / Ames)).